An 81-amino-acid polypeptide reads, in one-letter code: uncharacterized protein (81 aa).

Transmembrane regions (helical) follow at residues 27–47 (ASLL…LNLT) and 54–74 (IFGA…IFIM).

It is found in the cell membrane. This is an uncharacterized protein from Bacillus subtilis (strain 168).